Reading from the N-terminus, the 623-residue chain is Kelch repeat and BTB domain-containing protein 12 (623 aa).

The BTB domain maps to 25-92 (TDVVLVAEGV…MYSSNLPLTA (68 aa)). A BACK domain is found at 127–236 (CLGIYYYARD…GVDYLKGTMK (110 aa)). Kelch repeat units lie at residues 390–440 (NLYL…RMKG), 441–496 (RLYV…ALNG), 498–551 (IYVL…ASNA), and 557–607 (KLYV…LVAN).

The chain is Kelch repeat and BTB domain-containing protein 12 (kbtbd12) from Danio rerio (Zebrafish).